The sequence spans 1070 residues: [F-actin]-monooxygenase MICAL1 (1070 aa).

Residues 1 to 489 (MASTISTNPA…RDLYDMEAKE (489 aa)) are monooxygenase domain. FAD is bound by residues Cys-95, 114–116 (EKR), 121–123 (RHN), Phe-181, Tyr-293, and Asp-393. Thr-475 is subject to Phosphothreonine. The 105-residue stretch at 508-612 (VGSQEELLRW…YLSHFHSAFK (105 aa)) folds into the Calponin-homology (CH) domain. Residues 643 to 690 (QRTRTQENGEDAGGKKPRLEVKAETPSTEEPPVPKPDEPMTPPSQQQD) form a disordered region. Positions 646 to 665 (RTQENGEDAGGKKPRLEVKA) are enriched in basic and acidic residues. Pro residues predominate over residues 671 to 684 (EEPPVPKPDEPMTP). In terms of domain architecture, LIM zinc-binding spans 695 to 757 (DLCALCGQHL…LQHLPQTGHE (63 aa)). 8 residues coordinate Zn(2+): Cys-697, Cys-700, His-718, Cys-721, Cys-724, Cys-727, Cys-747, and His-750. 2 disordered regions span residues 754–838 (TGHE…RSCS) and 865–887 (MEMG…EDVP). A compositionally biased stretch (basic and acidic residues) spans 755 to 766 (GHEEDSSDRGPE). Positions 770-781 (LPMSSENNTPSG) are enriched in polar residues. Ser-793, Ser-875, and Ser-876 each carry phosphoserine. A compositionally biased stretch (acidic residues) spans 876-887 (SEEETEEEEDVP). Residues 904–1070 (GTMNNYPTWR…ELASEPGVQG (167 aa)) are important for interaction with RAB8A. A bMERB domain is found at 921–1070 (KEEEMKRFCK…ELASEPGVQG (150 aa)). Residues 928–1030 (FCKAQAIQRR…EETLKTAADR (103 aa)) adopt a coiled-coil conformation. The residue at position 1060 (Ser-1060) is a Phosphoserine.

The protein belongs to the Mical family. As to quaternary structure, interacts with STK38 and STK38L. Associates with the SH3 domain of NEDD9. Interacts with VIM and PLXNA3. Interacts with RAB1B, RAB8A, RAB10, RAB13 and RAB15 (in their GTP-bound forms); binding to RAB1B is of low affinity compared to other Rab proteins; at least in case of RAB8A and RAB10 can bind 2 molecules of the Rab proteins simultaneously. Interacts with GRAF1/ARHGAP26, GRAF2/ARHGAP10, RAB8A, RAB8B and RAB10; may bind simultaneously to GRAFs and Rabs and connects GRAFs to Rabs. Does not interact with RAB1 and RAB11A. FAD serves as cofactor.

The protein resides in the cytoplasm. The protein localises to the cytoskeleton. It localises to the endosome membrane. Its subcellular location is the midbody. The catalysed reaction is L-methionyl-[F-actin] + NADPH + O2 + H(+) = L-methionyl-(R)-S-oxide-[F-actin] + NADP(+) + H2O. It carries out the reaction NADPH + O2 + H(+) = H2O2 + NADP(+). In terms of biological role, monooxygenase that promotes depolymerization of F-actin by mediating oxidation of specific methionine residues on actin to form methionine-sulfoxide, resulting in actin filament disassembly and preventing repolymerization. In the absence of actin, it also functions as a NADPH oxidase producing H(2)O(2). Acts as a cytoskeletal regulator that connects NEDD9 to intermediate filaments. Also acts as a negative regulator of apoptosis via its interaction with STK38 and STK38L; acts by antagonizing STK38 and STK38L activation by MST1/STK4. Involved in regulation of lamina-specific connectivity in the nervous system such as the development of lamina-restricted hippocampal connections. Through redox regulation of the actin cytoskeleton controls the intracellular distribution of secretory vesicles containing L1/neurofascin/NgCAM family proteins in neurons, thereby regulating their cell surface levels. May act as Rab effector protein and play a role in vesicle trafficking. Promotes endosomal tubule extension by associating with RAB8 (RAB8A or RAB8B), RAB10 and GRAF (GRAF1/ARHGAP26 or GRAF2/ARHGAP10) on the endosomal membrane which may connect GRAFs to Rabs, thereby participating in neosynthesized Rab8-Rab10-Rab11-dependent protein export. The chain is [F-actin]-monooxygenase MICAL1 (MICAL1) from Bos taurus (Bovine).